A 152-amino-acid chain; its full sequence is Aspartate carbamoyltransferase regulatory chain (152 aa).

Zn(2+) contacts are provided by Cys108, Cys113, Cys137, and Cys140.

Belongs to the PyrI family. As to quaternary structure, contains catalytic and regulatory chains. Zn(2+) is required as a cofactor.

Its function is as follows. Involved in allosteric regulation of aspartate carbamoyltransferase. The sequence is that of Aspartate carbamoyltransferase regulatory chain from Neisseria gonorrhoeae (strain ATCC 700825 / FA 1090).